The sequence spans 579 residues: Mitochondrial distribution and morphology protein 31 (579 aa).

The transit peptide at 1 to 47 (MSLFTRPFLRSPRQFSVARYVYWARSPALRSNLRIPSIAAASLRAYS) directs the protein to the mitochondrion. The Mitochondrial matrix segment spans residues 48–114 (NESKTGRDAP…SDDISAFISW (67 aa)). A helical membrane pass occupies residues 115 to 135 (ILVSNIFIFIFWTTTFVSLIL). Over 136–558 (YLINTVFAQE…DEKRTLRLRR (423 aa)) the chain is Mitochondrial intermembrane. The helical transmembrane segment at 559–578 (VGFWSLQLILQVILMSLGAI) threads the bilayer. Position 579 (A579) is a topological domain, mitochondrial matrix.

The protein belongs to the MDM31/MDM32 family. Interacts with MDM32. Participates in a complex of about 600 kDa.

Its subcellular location is the mitochondrion inner membrane. Its function is as follows. Involved in the organization of the mitochondrial membranes and the global structure of the mitochondria. Also required for mitochondrial distribution and mobility as well as for the maintenance of mitochondrial DNA nucleoids structures. In Saccharomyces cerevisiae (strain ATCC 204508 / S288c) (Baker's yeast), this protein is Mitochondrial distribution and morphology protein 31 (MDM31).